Here is a 239-residue protein sequence, read N- to C-terminus: Endolytic peptidoglycan transglycosylase RlpA (239 aa).

The signal sequence occupies residues 1 to 25 (MTLTRKTLFLLTAAFGIHSFQTASA). One can recognise an SPOR domain in the interval 160 to 239 (VAENKDIFID…GMVRAVLTAG (80 aa)).

It belongs to the RlpA family.

In terms of biological role, lytic transglycosylase with a strong preference for naked glycan strands that lack stem peptides. In Neisseria meningitidis serogroup A / serotype 4A (strain DSM 15465 / Z2491), this protein is Endolytic peptidoglycan transglycosylase RlpA.